Reading from the N-terminus, the 141-residue chain is Large ribosomal subunit protein uL11 (141 aa).

Belongs to the universal ribosomal protein uL11 family. As to quaternary structure, part of the ribosomal stalk of the 50S ribosomal subunit. Interacts with L10 and the large rRNA to form the base of the stalk. L10 forms an elongated spine to which L12 dimers bind in a sequential fashion forming a multimeric L10(L12)X complex. Post-translationally, one or more lysine residues are methylated.

Functionally, forms part of the ribosomal stalk which helps the ribosome interact with GTP-bound translation factors. The chain is Large ribosomal subunit protein uL11 from Fusobacterium nucleatum subsp. nucleatum (strain ATCC 25586 / DSM 15643 / BCRC 10681 / CIP 101130 / JCM 8532 / KCTC 2640 / LMG 13131 / VPI 4355).